A 1412-amino-acid polypeptide reads, in one-letter code: Protein MODIFIER OF SNC1 1 (1412 aa).

Disordered stretches follow at residues 1-276 (MTSS…QSYP), 384-437 (GYGS…TQRP), 472-798 (QQMQ…KQKQ), 827-888 (NEGV…DESI), 909-1144 (DIKV…WNDG), and 1156-1412 (AEEM…GDRN). The span at 56 to 103 (SWGSKSSLNAWGTSSLSPRTESGPGSPSHLSNRPSSGGSVTRPSTADS) shows a compositional bias: polar residues. A Phosphoserine modification is found at S72. The span at 109-119 (SSSSVAWDSNS) shows a compositional bias: low complexity. Residues 120–135 (RPSSASGVFPSNQPSV) are compositionally biased toward polar residues. Composition is skewed to basic and acidic residues over residues 197 to 207 (AEKDTSEKSTR) and 236 to 267 (ANDRIGDANSWRRENQPYSEDAPRHCREEGQL). Basic and acidic residues predominate over residues 478-488 (RNERREIRNDA). 4 stretches are compositionally biased toward polar residues: residues 517–531 (KTRTNDGWQNSSSVV), 539–553 (QPRTLNSGNSANKVS), 565–581 (SKNSSHYNQGDSATNKN), and 610–639 (RIVNSEGNDAWQKTTVMSGSSHTTLATNTE). A compositionally biased stretch (basic and acidic residues) spans 665–713 (DPKDNQRSTMRELARQRAQQRQKEEEERARDQRAKALAKLEELNRRSQI). Positions 667–717 (KDNQRSTMRELARQRAQQRQKEEEERARDQRAKALAKLEELNRRSQIYEEG) form a coiled coil. 3 stretches are compositionally biased toward polar residues: residues 738–749 (GSHSSNATNSVE), 756–779 (KNTTQNTRTSTEYANNVGPSQQDN), and 829–847 (GVSSNNSDMPATSTVSAES). Positions 850 to 862 (PKRKNNRNGKKKH) are enriched in basic residues. Residues 877 to 888 (VGKETKSGDESI) are compositionally biased toward basic and acidic residues. The residue at position 883 (S883) is a Phosphoserine. Polar residues-rich tracts occupy residues 914–938 (GDSSEQISSFTNEESQNRAKNNWKS) and 983–1003 (QTTVPEFGTSSKSQHQGQTSS). Residues 1006-1023 (KRVEIERYVPKPIVKEMA) are compositionally biased toward basic and acidic residues. The segment covering 1056–1070 (LQPSGSTAGKSGSPS) has biased composition (polar residues). Residues 1071–1084 (KSRHGNGRQGKHGR) are compositionally biased toward basic residues. The segment covering 1106–1137 (FVTSNQPIRGTVNYHSSKQTEQIAAKDQTTCN) has biased composition (polar residues). Composition is skewed to basic and acidic residues over residues 1191–1202 (DPKKGNKRDFNK), 1222–1232 (KEGRVPGDHVW), and 1242–1251 (GGRESTRDKP). Composition is skewed to polar residues over residues 1266–1286 (GFTTEQKTTSADTQAQLQNRS) and 1293–1307 (VEQNPNSMFQKNTGQ). Basic and acidic residues-rich tracts occupy residues 1338 to 1351 (SNRDRQKQNLHYEY) and 1359 to 1369 (YDGERSREQSK). A compositionally biased stretch (low complexity) spans 1384-1397 (QGQQRQGGYQQQRG). A compositionally biased stretch (gly residues) spans 1400–1412 (GRNGGHGFTGDRN).

As to quaternary structure, interacts with TCP14 and TCP15.

In terms of biological role, involved in the regulation of the chromatin structure and DNA methylation at the SNC1 locus. Regulates the expression of SNC1 at chromatin level. The chain is Protein MODIFIER OF SNC1 1 (MOS1) from Arabidopsis thaliana (Mouse-ear cress).